Reading from the N-terminus, the 227-residue chain is Uridylate kinase (227 aa).

11–12 (GS) is a binding site for ATP. Gly45 serves as a coordination point for UMP. Positions 46 and 50 each coordinate ATP. UMP-binding positions include Asp67 and 114-120 (TEPGHTT). The ATP site is built by Thr140, Tyr146, and Asp149.

It belongs to the UMP kinase family. In terms of assembly, homohexamer.

Its subcellular location is the cytoplasm. The catalysed reaction is UMP + ATP = UDP + ADP. It functions in the pathway pyrimidine metabolism; CTP biosynthesis via de novo pathway; UDP from UMP (UMPK route): step 1/1. With respect to regulation, inhibited by UTP. Functionally, catalyzes the reversible phosphorylation of UMP to UDP. The sequence is that of Uridylate kinase from Thermoplasma volcanium (strain ATCC 51530 / DSM 4299 / JCM 9571 / NBRC 15438 / GSS1).